The sequence spans 344 residues: Phenylalanine--tRNA ligase alpha subunit (344 aa).

E256 contacts Mg(2+).

Belongs to the class-II aminoacyl-tRNA synthetase family. Phe-tRNA synthetase alpha subunit type 1 subfamily. As to quaternary structure, tetramer of two alpha and two beta subunits. Mg(2+) serves as cofactor.

It localises to the cytoplasm. The catalysed reaction is tRNA(Phe) + L-phenylalanine + ATP = L-phenylalanyl-tRNA(Phe) + AMP + diphosphate + H(+). This Onion yellows phytoplasma (strain OY-M) protein is Phenylalanine--tRNA ligase alpha subunit.